The chain runs to 332 residues: Apoptosis-enhancing nuclease (332 aa).

Positions methionine 1–proline 102 are disordered. Residues alanine 20–alanine 36 show a composition bias toward basic residues. Residues arginine 21–arginine 29 carry the Nucleolar localization signal motif. Residues glutamine 63–asparagine 73 are compositionally biased toward polar residues. The 157-residue stretch at tyrosine 105–tyrosine 261 folds into the Exonuclease domain. The short motif at arginine 160–lysine 183 is the Nuclear localization signal element. The segment at valine 272–proline 332 is disordered. Residues glycine 310–glycine 321 are compositionally biased toward basic and acidic residues.

It localises to the nucleus. The protein resides in the nucleolus. Exonuclease with activity against single- and double-stranded DNA and RNA. Mediates p53-induced apoptosis. When induced by p53 following DNA damage, digests double-stranded DNA to form single-stranded DNA and amplifies DNA damage signals, leading to enhancement of apoptosis. The protein is Apoptosis-enhancing nuclease of Rattus norvegicus (Rat).